Consider the following 212-residue polypeptide: Mediator of RNA polymerase II transcription subunit 20 (212 aa).

Belongs to the Mediator complex subunit 20 family. As to quaternary structure, component of the Mediator complex, which is composed of MED1, MED4, MED6, MED7, MED8, MED9, MED10, MED11, MED12, MED13, MED13L, MED14, MED15, MED16, MED17, MED18, MED19, MED20, MED21, MED22, MED23, MED24, MED25, MED26, MED27, MED29, MED30, MED31, CCNC, CDK8 and CDC2L6/CDK11. The MED12, MED13, CCNC and CDK8 subunits form a distinct module termed the CDK8 module. Mediator containing the CDK8 module is less active than Mediator lacking this module in supporting transcriptional activation. Individual preparations of the Mediator complex lacking one or more distinct subunits have been variously termed ARC, CRSP, DRIP, PC2, SMCC and TRAP. Interacts with PPARG.

The protein localises to the nucleus. Its function is as follows. Component of the Mediator complex, a coactivator involved in the regulated transcription of nearly all RNA polymerase II-dependent genes. Mediator functions as a bridge to convey information from gene-specific regulatory proteins to the basal RNA polymerase II transcription machinery. Mediator is recruited to promoters by direct interactions with regulatory proteins and serves as a scaffold for the assembly of a functional preinitiation complex with RNA polymerase II and the general transcription factors. The chain is Mediator of RNA polymerase II transcription subunit 20 (MED20) from Macaca fascicularis (Crab-eating macaque).